The sequence spans 289 residues: Formamidopyrimidine-DNA glycosylase 1 (289 aa).

The active-site Schiff-base intermediate with DNA is P2. Residue E3 is the Proton donor of the active site. K61 acts as the Proton donor; for beta-elimination activity in catalysis. DNA is bound by residues H100, R119, and K165. The FPG-type zinc-finger motif lies at 251–285 (DAYGREGENCRRCGAVIRRERFMNRSSFYCPRCQP). R275 functions as the Proton donor; for delta-elimination activity in the catalytic mechanism.

Belongs to the FPG family. In terms of assembly, monomer. The cofactor is Zn(2+).

It carries out the reaction Hydrolysis of DNA containing ring-opened 7-methylguanine residues, releasing 2,6-diamino-4-hydroxy-5-(N-methyl)formamidopyrimidine.. It catalyses the reaction 2'-deoxyribonucleotide-(2'-deoxyribose 5'-phosphate)-2'-deoxyribonucleotide-DNA = a 3'-end 2'-deoxyribonucleotide-(2,3-dehydro-2,3-deoxyribose 5'-phosphate)-DNA + a 5'-end 5'-phospho-2'-deoxyribonucleoside-DNA + H(+). Involved in base excision repair of DNA damaged by oxidation or by mutagenic agents. Acts as a DNA glycosylase that recognizes and removes damaged bases. Has a preference for oxidized purines, such as 7,8-dihydro-8-oxoguanine (8-oxoG) when paired with C, G or T, as well as methyl-faPy (formanidopyrimidine residues) in poly(dG-dC) and spiroiminodihydantoin:C base pairs. Unlike its E.coli ortholog has no activity on 8-oxoG:A. Has AP (apurinic/apyrimidinic) lyase activity and introduces nicks in the DNA strand. Cleaves the DNA backbone by beta-delta elimination to generate a single-strand break at the site of the removed base with both 3'- and 5'-phosphates. Cleaves ssDNA containing an AP site. Complements the H(2)O(2) sensitivity of an M.smegmatis fpg disruption mutant; upon expression in M.smegmatis excises 8-oxoG from dsDNA. The sequence is that of Formamidopyrimidine-DNA glycosylase 1 (fpg1) from Mycobacterium tuberculosis (strain ATCC 25618 / H37Rv).